Here is a 350-residue protein sequence, read N- to C-terminus: Palmitoyltransferase erf2 (350 aa).

Over 1–86 (MSYEKHSDAK…RLQMSSQYKA (86 aa)) the chain is Cytoplasmic. A helical membrane pass occupies residues 87–107 (FLISLFALILPGVLFFIFSAF). Topologically, residues 108–112 (WLWHH) are lumenal. Residues 113–133 (VSPAVPITFAYLYALAVVSMF) traverse the membrane as a helical segment. The Cytoplasmic portion of the chain corresponds to 134–225 (KCSTADPGIL…NTCIGRRNYR (92 aa)). The DHHC domain occupies 182 to 232 (VYCHTCHLYRPPRASHCHLCDNCVEYLDHHCIWLNTCIGRRNYRYYFIFLL). Residue cysteine 212 is the S-palmitoyl cysteine intermediate of the active site. The helical transmembrane segment at 226 to 246 (YYFIFLLSVVLSALYLTGLGF) threads the bilayer. Topologically, residues 247 to 270 (YTSIGSFHESTDTNFAAHLRRPWA) are lumenal. Residues 271–291 (GVSFFLGIYGALGAILPGILF) form a helical membrane-spanning segment. Residues 292 to 350 (CYQCYLISVGQNVHEYLRAKSTETEDVHPFHDSIWLNFLVVLCRPKNVSYVRPTRKSYV) lie on the Cytoplasmic side of the membrane.

It belongs to the DHHC palmitoyltransferase family. ERF2/ZDHHC9 subfamily. As to quaternary structure, interacts with erf4. In terms of processing, autopalmitoylated.

It is found in the endoplasmic reticulum membrane. Its subcellular location is the golgi apparatus. It localises to the golgi stack membrane. It catalyses the reaction L-cysteinyl-[protein] + hexadecanoyl-CoA = S-hexadecanoyl-L-cysteinyl-[protein] + CoA. The erf2-erf4 complex is a palmitoyltransferase with a major role in driving sexual development. Palmitoylates ras1. Palmitoylates isp3. Palmitoylates rho3. The chain is Palmitoyltransferase erf2 from Schizosaccharomyces pombe (strain 972 / ATCC 24843) (Fission yeast).